Here is a 366-residue protein sequence, read N- to C-terminus: Chorismate synthase (366 aa).

NADP(+) is bound by residues Arg48 and Arg54. FMN contacts are provided by residues Arg125–Ser127, Asn238–Ala239, Gly278, Lys293–Ser297, and Arg319.

The protein belongs to the chorismate synthase family. In terms of assembly, homotetramer. The cofactor is FMNH2.

It catalyses the reaction 5-O-(1-carboxyvinyl)-3-phosphoshikimate = chorismate + phosphate. It participates in metabolic intermediate biosynthesis; chorismate biosynthesis; chorismate from D-erythrose 4-phosphate and phosphoenolpyruvate: step 7/7. Its function is as follows. Catalyzes the anti-1,4-elimination of the C-3 phosphate and the C-6 proR hydrogen from 5-enolpyruvylshikimate-3-phosphate (EPSP) to yield chorismate, which is the branch point compound that serves as the starting substrate for the three terminal pathways of aromatic amino acid biosynthesis. This reaction introduces a second double bond into the aromatic ring system. The protein is Chorismate synthase of Burkholderia multivorans (strain ATCC 17616 / 249).